Here is a 508-residue protein sequence, read N- to C-terminus: Photosystem II CP47 reaction center protein (508 aa).

6 helical membrane passes run 21–36 (SVHIMHTALVAGWAGS), 101–115 (IVFSGLCFLAAIWHW), 140–156 (GIHLFLSGVACFGFGAF), 203–218 (IAAGTLGILAGLFHLS), 237–252 (VLSSSIAAVFFAAFVV), and 457–472 (SFALLFFFGHIWHGAR).

This sequence belongs to the PsbB/PsbC family. PsbB subfamily. PSII is composed of 1 copy each of membrane proteins PsbA, PsbB, PsbC, PsbD, PsbE, PsbF, PsbH, PsbI, PsbJ, PsbK, PsbL, PsbM, PsbT, PsbX, PsbY, PsbZ, Psb30/Ycf12, at least 3 peripheral proteins of the oxygen-evolving complex and a large number of cofactors. It forms dimeric complexes. Binds multiple chlorophylls. PSII binds additional chlorophylls, carotenoids and specific lipids. serves as cofactor.

The protein localises to the plastid. It localises to the chloroplast thylakoid membrane. Functionally, one of the components of the core complex of photosystem II (PSII). It binds chlorophyll and helps catalyze the primary light-induced photochemical processes of PSII. PSII is a light-driven water:plastoquinone oxidoreductase, using light energy to abstract electrons from H(2)O, generating O(2) and a proton gradient subsequently used for ATP formation. The sequence is that of Photosystem II CP47 reaction center protein from Aethionema grandiflorum (Persian stone-cress).